Consider the following 142-residue polypeptide: Putative pre-16S rRNA nuclease (142 aa).

The protein belongs to the YqgF nuclease family.

Its subcellular location is the cytoplasm. In terms of biological role, could be a nuclease involved in processing of the 5'-end of pre-16S rRNA. In Lactobacillus acidophilus (strain ATCC 700396 / NCK56 / N2 / NCFM), this protein is Putative pre-16S rRNA nuclease.